The chain runs to 111 residues: UPF0339 protein in ptx operon 5'region (111 aa).

Repeat copies occupy residues 10–58 (DKAG…RYER) and 61–109 (SGAD…VVEV).

It belongs to the UPF0339 family. Duplicated subfamily.

The chain is UPF0339 protein in ptx operon 5'region from Stutzerimonas stutzeri (Pseudomonas stutzeri).